A 197-amino-acid polypeptide reads, in one-letter code: Phosphoheptose isomerase (197 aa).

The SIS domain maps to 34–196 (MVQCLLGGNK…DRTLFPQDEQ (163 aa)). 49–51 (NGG) contacts substrate. The Zn(2+) site is built by H58 and E62. Residues E62, 91 to 92 (ND), 117 to 119 (STS), S122, and Q172 contribute to the substrate site. Q172 and H180 together coordinate Zn(2+).

The protein belongs to the SIS family. GmhA subfamily. Homotetramer. The cofactor is Zn(2+).

Its subcellular location is the cytoplasm. It carries out the reaction 2 D-sedoheptulose 7-phosphate = D-glycero-alpha-D-manno-heptose 7-phosphate + D-glycero-beta-D-manno-heptose 7-phosphate. Its pathway is carbohydrate biosynthesis; D-glycero-D-manno-heptose 7-phosphate biosynthesis; D-glycero-alpha-D-manno-heptose 7-phosphate and D-glycero-beta-D-manno-heptose 7-phosphate from sedoheptulose 7-phosphate: step 1/1. In terms of biological role, catalyzes the isomerization of sedoheptulose 7-phosphate in D-glycero-D-manno-heptose 7-phosphate. The polypeptide is Phosphoheptose isomerase (Shewanella piezotolerans (strain WP3 / JCM 13877)).